The primary structure comprises 932 residues: Protocadherin gamma-A12 (932 aa).

The N-terminal stretch at 1–29 (MIPARLHRDYKGLVLLGILLGTLWETGCT) is a signal peptide. Cadherin domains follow at residues 30 to 133 (QIRY…APYF), 134 to 242 (RESE…APAF), 243 to 347 (AQPE…APEV), 348 to 452 (VLTS…PPVF), 453 to 562 (PQAS…APEI), and 570 to 683 (DGST…SPAN). The Extracellular segment spans residues 30 to 692 (QIRYSVPEEL…NSETSDLTLY (663 aa)). N-linked (GlcNAc...) asparagine glycans are attached at residues Asn265, Asn419, and Asn545. Residues 693 to 713 (LVVAVAAVSCVFLAFVILLLA) form a helical membrane-spanning segment. At 714–932 (LRLRRWHKSR…KKKSGKKEKK (219 aa)) the chain is on the cytoplasmic side. Disordered regions lie at residues 803-841 (SHGL…WPNN) and 902-932 (ATLT…KEKK). The span at 816-841 (WRFSQAQRPGTSGSQNGDDTGTWPNN) shows a compositional bias: polar residues. The segment covering 922–932 (NKKKSGKKEKK) has biased composition (basic residues).

The protein localises to the cell membrane. In terms of biological role, potential calcium-dependent cell-adhesion protein. May be involved in the establishment and maintenance of specific neuronal connections in the brain. This chain is Protocadherin gamma-A12 (PCDHGA12), found in Homo sapiens (Human).